We begin with the raw amino-acid sequence, 344 residues long: Dihydroorotase (344 aa).

H14 and H16 together coordinate Zn(2+). Substrate is bound by residues 16–18 (HLR) and N42. Zn(2+)-binding residues include K100, H137, and H175. Position 100 is an N6-carboxylysine (K100). H137 is a substrate binding site. L220 provides a ligand contact to substrate. D248 is a Zn(2+) binding site. D248 is a catalytic residue. Substrate-binding residues include H252 and A264.

Belongs to the metallo-dependent hydrolases superfamily. DHOase family. Class II DHOase subfamily. As to quaternary structure, homodimer. Zn(2+) serves as cofactor.

The catalysed reaction is (S)-dihydroorotate + H2O = N-carbamoyl-L-aspartate + H(+). It participates in pyrimidine metabolism; UMP biosynthesis via de novo pathway; (S)-dihydroorotate from bicarbonate: step 3/3. Catalyzes the reversible cyclization of carbamoyl aspartate to dihydroorotate. This Cupriavidus pinatubonensis (strain JMP 134 / LMG 1197) (Cupriavidus necator (strain JMP 134)) protein is Dihydroorotase.